Consider the following 349-residue polypeptide: MITFKRLSSARWGALLTSIAVLFFLAITKGADAKAGADLADIQAYRRLRTTTADAYYASEDRVFSVVKALKDLAHNAKLTFSLDKQLKVNNRFEVLRVKQVKTDVFSSSEFTDWAHYVAKICKRGRLPADRAIFKTMAAHYGDDELARMLATAKRTSRDTVVYQLKEIQQKSWKESGKSADDVYAILQLDAGGQNVLNNPGLPAWLSYVKSPSTDYIEALLLKLREQYDDVTVAKMIVSSQSGVNKRISGQLEKELSTAWRKNHITEMEVFQLLKLNDAGTTLLKNPILEIWFHYVWKMKRNDPYELLVSWFKKAGIDDAGLGKMIATAKQDDRNYWIAQTLEQRLSGK.

The first 33 residues, 1-33, serve as a signal peptide directing secretion; that stretch reads MITFKRLSSARWGALLTSIAVLFFLAITKGADA. The RxLR-dEER motif lies at 46 to 62; the sequence is RRLRTTTADAYYASEDR.

This sequence belongs to the RxLR effector family. Interacts directly with the potato ortholog of vascular highway 1 (VH1)-interacting kinase (VIK), encoding a predicted MEK kinase (MAP3K).

The protein resides in the secreted. Its subcellular location is the host cell membrane. Functionally, effector that promotes P.infestans virulence in Nicotiana benthamiana and potato. Attenuates cell death triggered by the pathogen-associated molecular pattern infestin 1 (INF1), indicating that the effector suppresses pattern-triggered immunity. However, it does not attenuate cell death triggered by a range of resistance proteins, suggesting that it specifically suppresses INF1-triggered cell death (ICD). Targets host MAP3K VIK in order to utilize or promote its ability to negatively regulate immunity. This Phytophthora infestans (strain T30-4) (Potato late blight agent) protein is RxLR effector protein CRE15.